The following is a 580-amino-acid chain: Tetratricopeptide repeat protein 39C (580 aa).

3 TPR repeats span residues 312-345 (SLFM…AVDQ), 350-383 (HVCL…SRWS), and 482-515 (GLKH…ELCR).

Belongs to the TTC39 family.

This Mus musculus (Mouse) protein is Tetratricopeptide repeat protein 39C (Ttc39c).